A 349-amino-acid chain; its full sequence is DNA-directed RNA polymerase subunit alpha (349 aa).

The tract at residues 1–226 (MLIAQRPTLI…GLFGLAQELN (226 aa)) is alpha N-terminal domain (alpha-NTD). The tract at residues 241-349 (AALAADLALP…GAEFIETEQY (109 aa)) is alpha C-terminal domain (alpha-CTD). Positions 309-349 (KDSPPGFDPRQAVDTYGTDAYSPSFSDPSDDGAEFIETEQY) are disordered. The span at 336 to 349 (PSDDGAEFIETEQY) shows a compositional bias: acidic residues.

The protein belongs to the RNA polymerase alpha chain family. In terms of assembly, homodimer. The RNAP catalytic core consists of 2 alpha, 1 beta, 1 beta' and 1 omega subunit. When a sigma factor is associated with the core the holoenzyme is formed, which can initiate transcription.

It carries out the reaction RNA(n) + a ribonucleoside 5'-triphosphate = RNA(n+1) + diphosphate. Functionally, DNA-dependent RNA polymerase catalyzes the transcription of DNA into RNA using the four ribonucleoside triphosphates as substrates. This chain is DNA-directed RNA polymerase subunit alpha, found in Frankia casuarinae (strain DSM 45818 / CECT 9043 / HFP020203 / CcI3).